A 611-amino-acid chain; its full sequence is Threonine--tRNA ligase (611 aa).

Residues 209 to 502 are catalytic; it reads DHRRLGKDLE…MTENYAGDFP (294 aa). 3 residues coordinate Zn(2+): Cys302, His353, and His479.

The protein belongs to the class-II aminoacyl-tRNA synthetase family. In terms of assembly, homodimer. Requires Zn(2+) as cofactor.

It localises to the cytoplasm. The enzyme catalyses tRNA(Thr) + L-threonine + ATP = L-threonyl-tRNA(Thr) + AMP + diphosphate + H(+). Its function is as follows. Catalyzes the attachment of threonine to tRNA(Thr) in a two-step reaction: L-threonine is first activated by ATP to form Thr-AMP and then transferred to the acceptor end of tRNA(Thr). Also edits incorrectly charged L-seryl-tRNA(Thr). The sequence is that of Threonine--tRNA ligase from Synechococcus sp. (strain CC9902).